Reading from the N-terminus, the 163-residue chain is ATP synthase subunit b 2 (163 aa).

A helical membrane pass occupies residues 5-25 (SLATLWATIALIIFLGVAIYI).

Belongs to the ATPase B chain family. F-type ATPases have 2 components, F(1) - the catalytic core - and F(0) - the membrane proton channel. F(1) has five subunits: alpha(3), beta(3), gamma(1), delta(1), epsilon(1). F(0) has three main subunits: a(1), b(2) and c(10-14). The alpha and beta chains form an alternating ring which encloses part of the gamma chain. F(1) is attached to F(0) by a central stalk formed by the gamma and epsilon chains, while a peripheral stalk is formed by the delta and b chains.

The protein resides in the cell inner membrane. F(1)F(0) ATP synthase produces ATP from ADP in the presence of a proton or sodium gradient. F-type ATPases consist of two structural domains, F(1) containing the extramembraneous catalytic core and F(0) containing the membrane proton channel, linked together by a central stalk and a peripheral stalk. During catalysis, ATP synthesis in the catalytic domain of F(1) is coupled via a rotary mechanism of the central stalk subunits to proton translocation. Its function is as follows. Component of the F(0) channel, it forms part of the peripheral stalk, linking F(1) to F(0). The protein is ATP synthase subunit b 2 of Mesorhizobium japonicum (strain LMG 29417 / CECT 9101 / MAFF 303099) (Mesorhizobium loti (strain MAFF 303099)).